The chain runs to 160 residues: Cytochrome b6-f complex subunit 4 (160 aa).

3 consecutive transmembrane segments (helical) span residues 36-56 (LLYI…GLSV), 95-115 (LLGV…PFIE), and 131-151 (TVFL…ALPI).

Belongs to the cytochrome b family. PetD subfamily. The 4 large subunits of the cytochrome b6-f complex are cytochrome b6, subunit IV (17 kDa polypeptide, petD), cytochrome f and the Rieske protein, while the 4 small subunits are petG, petL, petM and petN. The complex functions as a dimer.

It is found in the plastid. The protein localises to the chloroplast thylakoid membrane. In terms of biological role, component of the cytochrome b6-f complex, which mediates electron transfer between photosystem II (PSII) and photosystem I (PSI), cyclic electron flow around PSI, and state transitions. The protein is Cytochrome b6-f complex subunit 4 of Chaetosphaeridium globosum (Charophycean green alga).